Here is a 24-residue protein sequence, read N- to C-terminus: Brevinin-1Sa (24 aa).

Cys-18 and Cys-24 form a disulfide bridge.

As to expression, expressed by the skin glands.

The protein resides in the secreted. Functionally, antibacterial activity against Gram-negative bacterium E.coli. The polypeptide is Brevinin-1Sa (Lithobates sphenocephalus (Southern leopard frog)).